Reading from the N-terminus, the 291-residue chain is N-acetylmannosamine kinase (291 aa).

ATP contacts are provided by residues 5–12 (AIDIGGTK) and 132–139 (GVGGGVVC). Residues histidine 156, cysteine 166, cysteine 168, and cysteine 173 each contribute to the Zn(2+) site.

Belongs to the ROK (NagC/XylR) family. NanK subfamily. In terms of assembly, homodimer.

The enzyme catalyses an N-acyl-D-mannosamine + ATP = an N-acyl-D-mannosamine 6-phosphate + ADP + H(+). It participates in amino-sugar metabolism; N-acetylneuraminate degradation; D-fructose 6-phosphate from N-acetylneuraminate: step 2/5. Its function is as follows. Catalyzes the phosphorylation of N-acetylmannosamine (ManNAc) to ManNAc-6-P. In Salmonella gallinarum (strain 287/91 / NCTC 13346), this protein is N-acetylmannosamine kinase.